Here is a 331-residue protein sequence, read N- to C-terminus: Germ cell-specific gene 1-like protein (331 aa).

The Cytoplasmic portion of the chain corresponds to 1–8 (MKTSRRGR). The chain crosses the membrane as a helical span at residues 9–29 (ALLAVALNLLALLFATTAFLT). Residues 30–132 (THWCQGTQRV…FIDLAPASEK (103 aa)) are Extracellular-facing. The chain crosses the membrane as a helical span at residues 133 to 153 (GVLWLSVVSEVLYILLLVVGF). Over 154 to 173 (SLMCLELFHSSNVIDGLKLN) the chain is Cytoplasmic. Residues 174-194 (AFAAVFTVLSGLLGMVAHMMY) traverse the membrane as a helical segment. The Extracellular segment spans residues 195 to 217 (TQVFQVTVSLGPEDWRPHSWDYG). The helical transmembrane segment at 218–238 (WSFCLAWGSFTCCMAASVTTL) threads the bilayer. The Cytoplasmic segment spans residues 239 to 331 (NSYTKTVIEF…RQCWVLGHWV (93 aa)).

It belongs to the GSG1 family. Component of the inner core of AMPAR complex. AMPAR complex consists of an inner core made of 4 pore-forming GluA/GRIA proteins (GRIA1, GRIA2, GRIA3 and GRIA4) and 4 major auxiliary subunits arranged in a twofold symmetry. One of the two pairs of distinct binding sites is occupied either by CNIH2, CNIH3 or CACNG2, CACNG3. The other harbors CACNG2, CACNG3, CACNG4, CACNG8 or GSG1L. This inner core of AMPAR complex is complemented by outer core constituents binding directly to the GluA/GRIA proteins at sites distinct from the interaction sites of the inner core constituents. Outer core constituents include at least PRRT1, PRRT2, CKAMP44/SHISA9, FRRS1L and NRN1. The proteins of the inner and outer core serve as a platform for other, more peripherally associated AMPAR constituents. Alone or in combination, these auxiliary subunits control the gating and pharmacology of the AMPAR complex and profoundly impact their biogenesis and protein processing.

The protein resides in the cell membrane. It localises to the synapse. In terms of biological role, as a component of the inner core of AMPAR complex, modifies AMPA receptor (AMPAR) gating. The protein is Germ cell-specific gene 1-like protein (GSG1L) of Homo sapiens (Human).